The chain runs to 273 residues: Undecaprenyl-diphosphatase (273 aa).

7 consecutive transmembrane segments (helical) span residues 6 to 26, 45 to 65, 90 to 110, 116 to 136, 190 to 210, 222 to 242, and 252 to 272; these read SLLI…LPVS, AKTF…VMFW, LTLI…LLFH, LFNP…LIAA, YAAS…ATAL, GDIP…LIAI, and ISFI…YVVF.

It belongs to the UppP family.

The protein localises to the cell inner membrane. The enzyme catalyses di-trans,octa-cis-undecaprenyl diphosphate + H2O = di-trans,octa-cis-undecaprenyl phosphate + phosphate + H(+). In terms of biological role, catalyzes the dephosphorylation of undecaprenyl diphosphate (UPP). Confers resistance to bacitracin. The chain is Undecaprenyl-diphosphatase from Escherichia coli O157:H7.